Reading from the N-terminus, the 713-residue chain is Probable muscarinic acetylcholine receptor gar-1 (713 aa).

The Extracellular portion of the chain corresponds to 1 to 20 (MPNYTVPPDPADTSWDSPYS). Residue Asn3 is glycosylated (N-linked (GlcNAc...) asparagine). The helical transmembrane segment at 21–41 (IPVQIVVWIIIIVLSLETIIG) threads the bilayer. At 42-66 (NAMVVMAYRIERNISKQVSNRYIVS) the chain is on the cytoplasmic side. Residues 67-87 (LAISDLIIGIEGFPFFTVYVL) form a helical membrane-spanning segment. The Extracellular segment spans residues 88-101 (NGDRWPLGWVACQT). Cysteines 99 and 180 form a disulfide. Residues 102–122 (WLFLDYTLCLVSILTVLLITA) traverse the membrane as a helical segment. At 123–144 (DRYLSVCHTAKYLKWQSPTKTQ) the chain is on the cytoplasmic side. The chain crosses the membrane as a helical span at residues 145–165 (LLIVMSWLLPAIIFGIMIYGW). Topologically, residues 166–189 (QAMTGQSTSMSGAECSAPFLSNPY) are extracellular. Residues 190–210 (VNMGMYVAYYWTTLVAMLILY) form a helical membrane-spanning segment. Topologically, residues 211-633 (KGIHQAAKNL…QTKAEKRAHK (423 aa)) are cytoplasmic. Disordered regions lie at residues 256 to 350 (KEKA…SRRC), 381 to 403 (SRYS…VEKA), 427 to 475 (KNTD…KQAE), and 515 to 585 (LIRR…TDTF). Polar residues-rich tracts occupy residues 266–275 (SGYTSNQAGD) and 287–315 (PETS…NDQN). Composition is skewed to basic and acidic residues over residues 320 to 333 (EEER…RESN) and 393 to 403 (HENDEKEVEKA). The span at 429–439 (TDSNNDSDTTS) shows a compositional bias: low complexity. Over residues 444-457 (RSRKYKKNKRPRSS) the composition is skewed to basic residues. The segment covering 557 to 571 (LTVNNENRGETSSQP) has biased composition (polar residues). Residues 634 to 656 (AFRTITFIVGFFAILWSPYYIMA) form a helical membrane-spanning segment. The Extracellular segment spans residues 657–670 (TVYGFCKGECIPSF). Residues 671 to 693 (LYTLSYYMCYLNSSGNPFAYALA) traverse the membrane as a helical segment. The Cytoplasmic portion of the chain corresponds to 694–713 (NRQFRSAFMRMFRGNFNKVA).

It belongs to the G-protein coupled receptor 1 family. Muscarinic acetylcholine receptor subfamily. Expressed in head region of the larva. In adults, expression is seen in the periventricularis magnocellularis (PVM) neuron.

It is found in the cell membrane. Functionally, the muscarinic acetylcholine receptor mediates various cellular responses, including inhibition of adenylate cyclase, breakdown of phosphoinositides and modulation of potassium channels through the action of G proteins. Primary transducing effect is Pi turnover. This is Probable muscarinic acetylcholine receptor gar-1 (gar-1) from Caenorhabditis elegans.